Reading from the N-terminus, the 433-residue chain is Inward rectifier potassium channel 18 (433 aa).

Over 1-77 the chain is Cytoplasmic; sequence MTAASRANPY…LADMFTTCVD (77 aa). The helical transmembrane segment at 78-104 threads the bilayer; that stretch reads IRWRYMLLIFSLAFLASWLLFGVIFWV. Over 105–129 the chain is Extracellular; that stretch reads IAVAHGDLEPAEGHGRTPCVMQVHG. Positions 130–146 form an intramembrane region, helical; Pore-forming; sequence FMAAFLFSIETQTTIGY. The Selectivity filter signature appears at 143-148; sequence TIGYGL. Over 147-155 the chain is Extracellular; the sequence is GLRCVTEEC. The helical transmembrane segment at 156 to 183 threads the bilayer; the sequence is LVAVFMVVAQSIVGCIIDSFMIGAIMAK. Residues 184–433 lie on the Cytoplasmic side of the membrane; sequence MARPKKRAQT…QRPYRRGSEI (250 aa). A disordered region spans residues 387 to 433; that stretch reads DEEDEADGDQDGRSRDGLSPQARHDFDRLQAGGGVLEQRPYRRGSEI. A compositionally biased stretch (basic and acidic residues) spans 396-414; sequence QDGRSRDGLSPQARHDFDR.

This sequence belongs to the inward rectifier-type potassium channel (TC 1.A.2.1) family. KCNJ12 subfamily. In terms of assembly, can form heteromeric channels with Kir2.1/KCNJ2. Can form heteromeric channels with Kir2.2/KCNJ12. Probably phosphorylated by PKC; decreases single-channel open probability. In terms of tissue distribution, specifically expressed in skeletal muscle.

It localises to the cell membrane. It is found in the endoplasmic reticulum. It catalyses the reaction K(+)(in) = K(+)(out). Its function is as follows. Inward rectifier potassium channels are characterized by a greater tendency to allow potassium to flow into the cell rather than out of it. Their voltage dependence is regulated by the concentration of extracellular potassium; as external potassium is raised, the voltage range of the channel opening shifts to more positive voltages. The inward rectification is mainly due to the blockage of outward current by internal magnesium. The chain is Inward rectifier potassium channel 18 (KCNJ18) from Homo sapiens (Human).